A 481-amino-acid chain; its full sequence is Ankyrin repeat, SAM and basic leucine zipper domain-containing protein 1 (481 aa).

The span at 1–16 (MASGGLRGLAVAGGGE) shows a compositional bias: gly residues. Positions 1–23 (MASGGLRGLAVAGGGESSDSEDD) are disordered. Serine 17, serine 18, and serine 20 each carry phosphoserine. 6 ANK repeats span residues 45–74 (EKNE…SVDS), 78–107 (YGWT…NASF), 110–144 (DKQT…DPNV), 148–177 (RLMT…EVNT), 181–210 (NGYT…NKML), and 214–243 (DGKI…PLEG). Positions 272 to 334 (SYTAFGDLEI…KILSALKELE (63 aa)) constitute an SAM domain.

As to quaternary structure, interacts with DDX4, PIWIL1, RANBP9 and TDRD1.

Its subcellular location is the cytoplasm. Its function is as follows. Plays a central role during spermatogenesis by repressing transposable elements and preventing their mobilization, which is essential for the germline integrity. Acts via the piRNA metabolic process, which mediates the repression of transposable elements during meiosis by forming complexes composed of piRNAs and Piwi proteins and governs the methylation and subsequent repression of transposons. Its association with pi-bodies suggests a participation in the primary piRNAs metabolic process. Required prior to the pachytene stage to facilitate the production of multiple types of piRNAs, including those associated with repeats involved in the regulation of retrotransposons. May act by mediating protein-protein interactions during germ cell maturation. The chain is Ankyrin repeat, SAM and basic leucine zipper domain-containing protein 1 (ASZ1) from Microcebus murinus (Gray mouse lemur).